A 279-amino-acid polypeptide reads, in one-letter code: 3-methyl-2-oxobutanoate hydroxymethyltransferase (279 aa).

2 residues coordinate Mg(2+): Asp-44 and Asp-83. Residues 44-45 (DS), Asp-83, and Lys-113 contribute to the 3-methyl-2-oxobutanoate site. Glu-115 contacts Mg(2+). The active-site Proton acceptor is Glu-182.

It belongs to the PanB family. Homodecamer; pentamer of dimers. Mg(2+) is required as a cofactor.

The protein resides in the cytoplasm. It catalyses the reaction 3-methyl-2-oxobutanoate + (6R)-5,10-methylene-5,6,7,8-tetrahydrofolate + H2O = 2-dehydropantoate + (6S)-5,6,7,8-tetrahydrofolate. Its pathway is cofactor biosynthesis; (R)-pantothenate biosynthesis; (R)-pantoate from 3-methyl-2-oxobutanoate: step 1/2. In terms of biological role, catalyzes the reversible reaction in which hydroxymethyl group from 5,10-methylenetetrahydrofolate is transferred onto alpha-ketoisovalerate to form ketopantoate. The chain is 3-methyl-2-oxobutanoate hydroxymethyltransferase from Desulfotalea psychrophila (strain LSv54 / DSM 12343).